The chain runs to 330 residues: Putative [LysW]-L-2-aminoadipate/[LysW]-L-glutamate phosphate reductase (330 aa).

10-13 (SGYI) is a binding site for NADP(+). Cysteine 142 is a catalytic residue. Position 297 (asparagine 297) interacts with NADP(+).

This sequence belongs to the NAGSA dehydrogenase family. Type 1 subfamily. LysY sub-subfamily.

The protein resides in the cytoplasm. It catalyses the reaction [amino-group carrier protein]-C-terminal-N-(1-carboxy-5-oxopentan-1-yl)-L-glutamine + phosphate + NADP(+) = [amino-group carrier protein]-C-terminal-N-(1-carboxy-5-phosphooxy-5-oxopentan-1-yl)-L-glutamine + NADPH + H(+). The enzyme catalyses [amino-group carrier protein]-C-terminal-gamma-(L-glutamyl-5-semialdehyde)-L-glutamate + phosphate + NADP(+) = [amino-group carrier protein]-C-terminal-gamma-(5-phospho-L-glutamyl)-L-glutamate + NADPH + H(+). The protein operates within amino-acid biosynthesis; L-lysine biosynthesis via AAA pathway; L-lysine from L-alpha-aminoadipate (Thermus route): step 3/5. It participates in amino-acid biosynthesis; L-arginine biosynthesis. In terms of biological role, involved in both the arginine and lysine biosynthetic pathways. In Pyrococcus furiosus (strain ATCC 43587 / DSM 3638 / JCM 8422 / Vc1), this protein is Putative [LysW]-L-2-aminoadipate/[LysW]-L-glutamate phosphate reductase.